The primary structure comprises 157 residues: UPF0225 protein PSPPH_1399 (157 aa).

Belongs to the UPF0225 family.

The polypeptide is UPF0225 protein PSPPH_1399 (Pseudomonas savastanoi pv. phaseolicola (strain 1448A / Race 6) (Pseudomonas syringae pv. phaseolicola (strain 1448A / Race 6))).